Reading from the N-terminus, the 993-residue chain is Serine/threonine-protein phosphatase 6 regulatory ankyrin repeat subunit B (993 aa).

28 ANK repeats span residues Cys-7 to Ala-36, Glu-40 to Ala-69, Met-73 to Ala-102, Asn-106 to Val-135, Gly-139 to Ala-168, Lys-172 to Cys-201, Lys-205 to Glu-234, Tyr-238 to Gln-267, Ser-271 to Ile-301, Asp-305 to Cys-334, Asp-338 to Lys-367, His-371 to Thr-400, Phe-404 to Lys-433, Cys-437 to Glu-466, Trp-470 to Glu-498, Glu-531 to Glu-561, Ala-566 to Ile-595, Lys-599 to Val-628, Thr-633 to Val-662, Lys-669 to Ala-698, Val-702 to Cys-731, Arg-735 to Asp-764, Gln-771 to Phe-800, Asn-803 to Val-832, Lys-838 to Ala-867, Ser-871 to Val-901, Asp-905 to Leu-934, and Ala-941 to Ala-970. The interval Asn-974–Glu-993 is disordered.

In terms of assembly, protein phosphatase 6 (PP6) holoenzyme is proposed to be a heterotrimeric complex formed by the catalytic subunit, a SAPS domain-containing subunit (PP6R) and an ankyrin repeat-domain containing regulatory subunit (ARS). Interacts with PPP6R1.

Putative regulatory subunit of protein phosphatase 6 (PP6) that may be involved in the recognition of phosphoprotein substrates. The sequence is that of Serine/threonine-protein phosphatase 6 regulatory ankyrin repeat subunit B (Ankrd44) from Mus musculus (Mouse).